The chain runs to 332 residues: Malate dehydrogenase, cytoplasmic (332 aa).

NAD(+) is bound by residues 16–17 (QI), D43, and G90. R99 is an oxaloacetate binding site. NAD(+) is bound by residues Q113 and N132. N132, R163, H188, and S243 together coordinate oxaloacetate. Catalysis depends on H188, which acts as the Proton acceptor.

Belongs to the LDH/MDH superfamily. MDH type 2 family. Homodimer.

The protein localises to the cytoplasm. The catalysed reaction is (S)-malate + NAD(+) = oxaloacetate + NADH + H(+). This is Malate dehydrogenase, cytoplasmic (CMDH) from Medicago sativa (Alfalfa).